A 207-amino-acid chain; its full sequence is Small ribosomal subunit protein uS4 (207 aa).

Residues 31–55 (KCKLDSKPGQHGRTSGARTSDYGTQ) are disordered. Polar residues predominate over residues 42–53 (GRTSGARTSDYG). One can recognise an S4 RNA-binding domain in the interval 97–160 (SRLDNVVYRM…KKQARILEAL (64 aa)).

This sequence belongs to the universal ribosomal protein uS4 family. As to quaternary structure, part of the 30S ribosomal subunit. Contacts protein S5. The interaction surface between S4 and S5 is involved in control of translational fidelity.

One of the primary rRNA binding proteins, it binds directly to 16S rRNA where it nucleates assembly of the body of the 30S subunit. Functionally, with S5 and S12 plays an important role in translational accuracy. This Paraburkholderia phymatum (strain DSM 17167 / CIP 108236 / LMG 21445 / STM815) (Burkholderia phymatum) protein is Small ribosomal subunit protein uS4.